A 1537-amino-acid polypeptide reads, in one-letter code: Adhesion G protein-coupled receptor L3 (1537 aa).

An N-terminal signal peptide occupies residues 1-19; the sequence is MWPPQLLILTMLLAPVVHG. The Extracellular portion of the chain corresponds to 20–943; the sequence is GKHNERHPAL…VKHSDAVHDL (924 aa). Residues 53 to 80 are disordered; that stretch reads PAAERSTAHRGQGPRGAARGVRGPGAPG. The SUEL-type lectin domain maps to 103-192; sequence SCESYPIELR…KYLEVQYECV (90 aa). Disulfide bonds link cysteine 104–cysteine 134, cysteine 113–cysteine 191, cysteine 146–cysteine 178, cysteine 159–cysteine 165, and cysteine 203–cysteine 385. The N-linked (GlcNAc...) asparagine glycan is linked to asparagine 161. The Olfactomedin-like domain maps to 202–461; the sequence is LCPGLLKGVY…VVKYSLDFGP (260 aa). Residues 317 to 347 are interaction with FLRT3; it reads YHDTSPYRWGGKSDIDLAVDENGLWVIYATE. Ca(2+) contacts are provided by aspartate 332, asparagine 380, alanine 381, and valine 435. The disordered stretch occupies residues 521 to 540; that stretch reads RSTTASLPGRRNRSTSTPSP. Residues asparagine 532, asparagine 617, asparagine 827, asparagine 840, asparagine 885, and asparagine 911 are each glycosylated (N-linked (GlcNAc...) asparagine). Residues 756–935 enclose the GAIN-B domain; it reads DIVRENTDNI…AVLMAHVEVK (180 aa). Intrachain disulfides connect cysteine 886–cysteine 917 and cysteine 905–cysteine 919. Residues 886–935 are GPS; sequence CSFWSYSKRTMTGYWSTQGCRLLTTNKTHTTCSCNHLTNFAVLMAHVEVK. The stachel stretch occupies residues 923 to 939; sequence TNFAVLMAHVEVKHSDA. Residues 944-969 traverse the membrane as a helical segment; that stretch reads LLDVITWVGILLSLVCLLICIFTFCF. Residues 970–975 lie on the Cytoplasmic side of the membrane; sequence FRGLQS. Residues 976–999 form a helical membrane-spanning segment; it reads DRNTIHKNLCISLFVAELLFLIGI. An N-linked (GlcNAc...) asparagine glycan is attached at asparagine 1000. Residues 1000 to 1006 are Extracellular-facing; the sequence is NRTDQPI. The chain crosses the membrane as a helical span at residues 1007 to 1034; that stretch reads ACAVFAALLHFFFLAAFTWMFLEGVQLY. Cysteine 1008 and cysteine 1080 form a disulfide bridge. At 1035-1048 the chain is on the cytoplasmic side; it reads IMLVEVFESEHSRR. Residues 1049 to 1071 traverse the membrane as a helical segment; that stretch reads KYFYLVGYGMPALIVAVSAAVDY. At 1072 to 1086 the chain is on the extracellular side; that stretch reads RSYGTDKVCWLRLDT. Residues 1087-1112 traverse the membrane as a helical segment; the sequence is YFIWSFIGPATLIIMLNVIFLGIALY. The Cytoplasmic segment spans residues 1113–1142; sequence KMFHHTAILKPESGCLDNINYEDNRPFIKS. A helical transmembrane segment spans residues 1143–1163; the sequence is WVIGAIALLCLLGLTWAFGLM. Over 1164–1168 the chain is Extracellular; it reads YINES. The N-linked (GlcNAc...) asparagine glycan is linked to asparagine 1166. Residues 1169–1195 form a helical membrane-spanning segment; that stretch reads TVIMAYLFTIFNSLQGMFIFIFHCVLQ. The Cytoplasmic portion of the chain corresponds to 1196–1537; it reads KKVRKEYGKC…KGPAHLVTSL (342 aa). The interval 1213-1237 is disordered; the sequence is GKSTESSIGSGKTSGSRTPGRYSTG. Serine 1254 and serine 1522 each carry phosphoserine. Residues 1512 to 1537 form a disordered region; sequence FIVPPNKDGASPEGTSKGPAHLVTSL. The PDZ-binding signature appears at 1532 to 1537; the sequence is HLVTSL.

This sequence belongs to the G-protein coupled receptor 2 family. LN-TM7 subfamily. In terms of assembly, heterodimer of 2 chains generated by proteolytic processing; the large extracellular N-terminal fragment and the membrane-bound C-terminal fragment predominantly remain associated and non-covalently linked. Interacts (via olfactomedin-like domain) with FLRT1 (via extracellular domain). Interacts (via olfactomedin-like domain) with FLRT2 (via extracellular domain). Interacts (via olfactomedin-like domain) with FLRT3 (via extracellular domain); the interaction is direct. Interacts (via extracellular domain) with TENM1. Interacts (via extracellular domain) with TENM2. Interacts (via extracellular domain) with TENM3. Identified in a complex with FLRT3 and UNC5B; does not interact with UNC5B by itself. Identified in a complex with FLRT3 and UNC5D; does not interact with UNC5D by itself. As to quaternary structure, interacts (via PDZ-binding motif) with SHANK3. Interacts (via PDZ-binding motif) with DLG4. Post-translationally, autoproteolytically processed at the GPS region of the GAIN-B domain; this cleavage modulates receptor activity. In terms of processing, O-glycosylated (major) and N-glycosylated. As to expression, localizes to postsynaptic spines in non-overlapping dendritic domains of CA1-region pyramidal neurons: specifically localizes to excitatory synapses in the S.oriens and S.radiatum, corresponding to distinct presynaptic inputs onto CA1-region pyramidal neurons.

It is found in the cell membrane. It localises to the postsynaptic cell membrane. Its subcellular location is the cell projection. The protein localises to the axon. The protein resides in the cell junction. Forms a heterodimer of 2 chains generated by proteolytic processing that remain associated through non-covalent interactions mediated by the GAIN-B domain. In the inactivated receptor, the Stachel sequence (also named stalk) is embedded in the GAIN-B domain, where it adopts a beta-strand conformation. On activation, the Stachel moves into the 7 transmembrane region and adopts a twisted hook-shaped configuration that forms contacts within the receptor, leading to coupling of a G-alpha protein, which activates signaling. The cleaved GAIN-B and N-terminal domains can then dissociate from the rest of the receptor. In terms of biological role, orphan adhesion G-protein coupled receptor (aGPCR), which mediates synapse specificity. Ligand binding causes a conformation change that triggers signaling via guanine nucleotide-binding proteins (G proteins) and modulates the activity of downstream effectors. ADGRL3 is coupled with different classes of G alpha proteins, such as G(12)/G(13), G(s), G(i) or G(q), depending on the context. Coupling to G(12)/G(13) G proteins, which mediates the activation Rho small GTPases is the most efficient. Following G-protein coupled receptor activation, associates with cell adhesion molecules that are expressed at the surface of adjacent cells to direct synapse specificity. Specifically mediates the establishment of Schaffer-collateral synapses formed by CA3-region axons on CA1-region pyramidal neurons in the hippocampus. Localizes to postsynaptic spines in excitatory synapses in the S.oriens and S.radiatum and interacts with presynaptic cell adhesion molecules FLRT3 and TENM2, promoting synapse formation. Plays a role in the development of glutamatergic synapses in the cortex. Important in determining the connectivity rates between the principal neurons in the cortex. Orphan adhesion G-protein coupled receptor (aGPCR), which mediates synapse specificity. Ligand binding causes a conformation change that triggers signaling via guanine nucleotide-binding proteins (G proteins) and modulates the activity of downstream effectors, such as adenylate cyclase. Isoform 1 is specifically coupled to G(s) G proteins and mediates activation of adenylate cyclase activity. Following G-protein coupled receptor activation, undergoes liquid-liquid phase transition, associates with (1) cell adhesion molecules that are expressed at the surface of adjacent cells, as well as (2) PDZ-containing proteins, such as SHANK3 and DLG4, in the cytoplasm to direct synapse formation. Its function is as follows. Orphan adhesion G-protein coupled receptor (aGPCR). Ligand binding causes a conformation change that triggers signaling via guanine nucleotide-binding proteins (G proteins) and modulates the activity of downstream effectors, such as RhoA pathway. Isoform 7 is coupled to G(12) and/or G(13) G proteins (GNA12 and GNA13, respectively) and mediates the activation Rho small GTPases. The sequence is that of Adhesion G protein-coupled receptor L3 from Mus musculus (Mouse).